A 339-amino-acid chain; its full sequence is DNA-directed RNA polymerase subunit alpha (339 aa).

An alpha N-terminal domain (alpha-NTD) region spans residues 1–235 (MVIQKNWQEL…DQLQVFVNFE (235 aa)). Residues 251-339 (FNPALLKKVD…DLAKRFEEHY (89 aa)) are alpha C-terminal domain (alpha-CTD).

It belongs to the RNA polymerase alpha chain family. Homodimer. The RNAP catalytic core consists of 2 alpha, 1 beta, 1 beta' and 1 omega subunit. When a sigma factor is associated with the core the holoenzyme is formed, which can initiate transcription.

It carries out the reaction RNA(n) + a ribonucleoside 5'-triphosphate = RNA(n+1) + diphosphate. Functionally, DNA-dependent RNA polymerase catalyzes the transcription of DNA into RNA using the four ribonucleoside triphosphates as substrates. The sequence is that of DNA-directed RNA polymerase subunit alpha from Methylorubrum extorquens (strain CM4 / NCIMB 13688) (Methylobacterium extorquens).